The primary structure comprises 524 residues: Peptide chain release factor 3 (524 aa).

The region spanning 9–275 (SRRRTFAIIS…AVVDLSPPPI (267 aa)) is the tr-type G domain. GTP contacts are provided by residues 18 to 25 (SHPDAGKT), 86 to 90 (DTPGH), and 140 to 143 (NKLD).

Belongs to the TRAFAC class translation factor GTPase superfamily. Classic translation factor GTPase family. PrfC subfamily.

Its subcellular location is the cytoplasm. In terms of biological role, increases the formation of ribosomal termination complexes and stimulates activities of RF-1 and RF-2. It binds guanine nucleotides and has strong preference for UGA stop codons. It may interact directly with the ribosome. The stimulation of RF-1 and RF-2 is significantly reduced by GTP and GDP, but not by GMP. In Dechloromonas aromatica (strain RCB), this protein is Peptide chain release factor 3.